The following is a 481-amino-acid chain: MVSQTVVSSLLVVLGAAGVRAQQRQSLWGQCGGSGWSGPTLCVDGAWCNPQNQWYHQCIPGSGPTTAQPQVPTTTARPTTTLVTSVVSSTTSPSGPVVTNPPVNPGTCPNTPSGLGTPVANQLNDPFTFHNGNKVTSKADWACRQREISELLQRYELGTLPPKPSSVTASFSGSTLSISVSEGGKSISFTVSINNRPSGAGPHPAIINFGTFGASLPVPAGVATINFNNDDIAQQQGGSSRGRGKFYDLYGSSHSAGALTAWAWGVSRIVDALELTQAQTGIDPTRLGVTGCSRNGKGAIVAGALEPRIALTLPQESGAGGSGCWRIATWQKNNGQNVQDSTQIVQENVWFSPNFNSYVNNVNQLPFDHHLLAGLIAPRALYVMENVDMEWLGKISTYGCMGIARKQWEALGALDNFGYSQVGGNSHCSFPSSQQGSELNAFIEKFLLKRSGGNTNIFRSTQTHSSFNLNNWSPWAVPSLN.

The first 21 residues, 1 to 21 (MVSQTVVSSLLVVLGAAGVRA), serve as a signal peptide directing secretion. Residues 23 to 59 (QRQSLWGQCGGSGWSGPTLCVDGAWCNPQNQWYHQCI) enclose the CBM1 domain. 3 disulfides stabilise this stretch: C108–C143, C292–C428, and C324–C400. The short motif at 291 to 296 (GCSRNG) is the GXSYXG catalytic site motif element. S293 acts as the Nucleophile in catalysis. Positions 297, 339, 347, and 391 each coordinate substrate. The active-site Proton donor/acceptor is H427.

The protein belongs to the carbohydrate esterase 15 (CE15) family.

The protein localises to the secreted. The enzyme catalyses a 4-O-methyl-alpha-D-glucuronosyl ester derivative + H2O = 4-O-methyl-alpha-D-glucuronate derivative + an alcohol + H(+). In terms of biological role, glucuronoyl esterase which may play a significant role in biomass degradation, as it is considered to disconnect hemicellulose from lignin through the hydrolysis of the ester bond between 4-O-methyl-D-glucuronic acid residues of glucuronoxylans and aromatic alcohols of lignin. This Podospora anserina (strain S / ATCC MYA-4624 / DSM 980 / FGSC 10383) (Pleurage anserina) protein is 4-O-methyl-glucuronoyl methylesterase.